The chain runs to 297 residues: N-acetylneuraminate lyase (297 aa).

Aceneuramate is bound by residues S47 and T48. The active-site Proton donor is Y137. The active-site Schiff-base intermediate with substrate is the K165. Aceneuramate contacts are provided by T167, G189, D191, E192, and S208.

This sequence belongs to the DapA family. NanA subfamily. Homotetramer.

The protein localises to the cytoplasm. The enzyme catalyses aceneuramate = aldehydo-N-acetyl-D-mannosamine + pyruvate. Its pathway is amino-sugar metabolism; N-acetylneuraminate degradation; D-fructose 6-phosphate from N-acetylneuraminate: step 1/5. Catalyzes the reversible aldol cleavage of N-acetylneuraminic acid (sialic acid; Neu5Ac) to form pyruvate and N-acetylmannosamine (ManNAc) via a Schiff base intermediate. The polypeptide is N-acetylneuraminate lyase (Escherichia coli (strain SE11)).